A 73-amino-acid chain; its full sequence is MAKEELIEFGGVVSEALPDNRYRVLLENGVEIWAYASGKMQKHRIRILAGDRVTLEMSPYDLTKGRINFRHKS.

The S1-like domain occupies M1–K72.

It belongs to the IF-1 family. As to quaternary structure, component of the 30S ribosomal translation pre-initiation complex which assembles on the 30S ribosome in the order IF-2 and IF-3, IF-1 and N-formylmethionyl-tRNA(fMet); mRNA recruitment can occur at any time during PIC assembly.

It is found in the cytoplasm. One of the essential components for the initiation of protein synthesis. Stabilizes the binding of IF-2 and IF-3 on the 30S subunit to which N-formylmethionyl-tRNA(fMet) subsequently binds. Helps modulate mRNA selection, yielding the 30S pre-initiation complex (PIC). Upon addition of the 50S ribosomal subunit IF-1, IF-2 and IF-3 are released leaving the mature 70S translation initiation complex. In Cupriavidus pinatubonensis (strain JMP 134 / LMG 1197) (Cupriavidus necator (strain JMP 134)), this protein is Translation initiation factor IF-1 1.